The sequence spans 340 residues: Cytoskeleton protein RodZ (340 aa).

The Cytoplasmic segment spans residues methionine 1–glycine 111. Residues leucine 19 to leucine 79 enclose the HTH cro/C1-type domain. A DNA-binding region (H-T-H motif) is located at residues glutamine 30–glutamate 49. A helical; Signal-anchor for type II membrane protein membrane pass occupies residues tryptophan 112–tryptophan 132. The Periplasmic portion of the chain corresponds to tryptophan 133 to proline 340. A disordered region spans residues alanine 162–alanine 252. A compositionally biased stretch (polar residues) spans alanine 183 to proline 201. Positions alanine 202–proline 233 are enriched in low complexity.

The protein belongs to the RodZ family.

Its subcellular location is the cell inner membrane. Functionally, cytoskeletal protein that is involved in cell-shape control through regulation of the length of the long axis. The polypeptide is Cytoskeleton protein RodZ (Erwinia tasmaniensis (strain DSM 17950 / CFBP 7177 / CIP 109463 / NCPPB 4357 / Et1/99)).